Reading from the N-terminus, the 955-residue chain is Protein translocase subunit SecA (955 aa).

ATP contacts are provided by residues Q87, 105-109 (GEGKT), and D494. A disordered region spans residues 861 to 955 (ASPAPAAPRP…KKAPRTKRKR (95 aa)). A compositionally biased stretch (low complexity) spans 874–888 (QEAAQQAQGTAAPSA). Over residues 943–955 (SKGKKAPRTKRKR) the composition is skewed to basic residues.

It belongs to the SecA family. As to quaternary structure, monomer and homodimer. Part of the essential Sec protein translocation apparatus which comprises SecA, SecYEG and auxiliary proteins SecDF. Other proteins may also be involved.

The protein resides in the cell membrane. Its subcellular location is the cytoplasm. The catalysed reaction is ATP + H2O + cellular proteinSide 1 = ADP + phosphate + cellular proteinSide 2.. Part of the Sec protein translocase complex. Interacts with the SecYEG preprotein conducting channel. Has a central role in coupling the hydrolysis of ATP to the transfer of proteins into and across the cell membrane, serving as an ATP-driven molecular motor driving the stepwise translocation of polypeptide chains across the membrane. The protein is Protein translocase subunit SecA of Rhodococcus jostii (strain RHA1).